The primary structure comprises 143 residues: Large-conductance mechanosensitive channel (143 aa).

Helical transmembrane passes span 10–30 and 89–109; these read FAVK…GAFS and GSFI…FLMV.

Belongs to the MscL family. In terms of assembly, homopentamer.

The protein localises to the cell inner membrane. Its function is as follows. Channel that opens in response to stretch forces in the membrane lipid bilayer. May participate in the regulation of osmotic pressure changes within the cell. This is Large-conductance mechanosensitive channel from Burkholderia multivorans (strain ATCC 17616 / 249).